The following is a 100-amino-acid chain: Small ribosomal subunit protein uS14c (100 aa).

This sequence belongs to the universal ribosomal protein uS14 family. Part of the 30S ribosomal subunit.

The protein localises to the plastid. It is found in the chloroplast. Binds 16S rRNA, required for the assembly of 30S particles. The sequence is that of Small ribosomal subunit protein uS14c from Pyropia yezoensis (Susabi-nori).